A 336-amino-acid polypeptide reads, in one-letter code: Filaggrin (336 aa).

The interval 1–313 (PDGSGRSSNR…GVQGAAASGQ (313 aa)) is disordered. 3 stretches are compositionally biased toward low complexity: residues 16–26 (QLSPSQSSDSQ), 40–66 (SSSANRRAGSSSGSGVQGASAGGLAAD), and 73–98 (ARQGQASAQGRAGSQGQAQGRVSSSA). 3 stretches are compositionally biased toward basic and acidic residues: residues 100-120 (RQGRRGVSESRASDSEGHSDF), 163-176 (DSQHQHGHQHEQQR), and 184-195 (HQHEHEQPESGH). Low complexity predominate over residues 285-311 (AQRGQSSSANRRAGSSSGSGVQGAAAS).

The protein belongs to the S100-fused protein family. In terms of processing, filaggrin is initially synthesized as a large, insoluble, highly phosphorylated precursor containing many tandem copies of 248 AA, which are not separated by large linker sequences. During terminal differentiation it is dephosphorylated and proteolytically cleaved. As to expression, expressed in the granular layer of the epidermis (at protein level). Expressed in the epidermis of the ear (at protein level).

The protein resides in the cytoplasmic granule. Its function is as follows. Aggregates keratin intermediate filaments and promotes disulfide-bond formation among the intermediate filaments during terminal differentiation of mammalian epidermis. The polypeptide is Filaggrin (Flg) (Mus musculus (Mouse)).